Consider the following 644-residue polypeptide: Ribonuclease R (644 aa).

Positions 211-529 (RINYSHIPFI…LHRLLKELLF (319 aa)) constitute an RNB domain. The S1 motif domain occupies 573 to 644 (LEFLEKEFLG…ITERIKEHVS (72 aa)).

This sequence belongs to the RNR ribonuclease family. RNase R subfamily.

It localises to the cytoplasm. The catalysed reaction is Exonucleolytic cleavage in the 3'- to 5'-direction to yield nucleoside 5'-phosphates.. Its function is as follows. 3'-5' exoribonuclease that releases 5'-nucleoside monophosphates and is involved in maturation of structured RNAs. The protein is Ribonuclease R of Helicobacter pylori (strain J99 / ATCC 700824) (Campylobacter pylori J99).